A 333-amino-acid chain; its full sequence is Adenosine deaminase (333 aa).

2 residues coordinate Zn(2+): His12 and His14. Positions 14, 16, and 170 each coordinate substrate. His197 is a Zn(2+) binding site. The Proton donor role is filled by Glu200. A Zn(2+)-binding site is contributed by Asp278. Asp279 is a substrate binding site.

The protein belongs to the metallo-dependent hydrolases superfamily. Adenosine and AMP deaminases family. Adenosine deaminase subfamily. Zn(2+) is required as a cofactor.

It carries out the reaction adenosine + H2O + H(+) = inosine + NH4(+). It catalyses the reaction 2'-deoxyadenosine + H2O + H(+) = 2'-deoxyinosine + NH4(+). Catalyzes the hydrolytic deamination of adenosine and 2-deoxyadenosine. The polypeptide is Adenosine deaminase (Aliivibrio fischeri (strain MJ11) (Vibrio fischeri)).